The chain runs to 569 residues: Urease subunit alpha (569 aa).

The region spanning 131–569 (GSIDTHIHFI…VPMAQRYFLL (439 aa)) is the Urease domain. Positions 136, 138, and 219 each coordinate Ni(2+). Lysine 219 bears the N6-carboxylysine mark. Histidine 221 provides a ligand contact to substrate. Positions 248 and 274 each coordinate Ni(2+). The active-site Proton donor is the histidine 322. Aspartate 362 contacts Ni(2+).

The protein belongs to the metallo-dependent hydrolases superfamily. Urease alpha subunit family. As to quaternary structure, heterotrimer of UreA (gamma), UreB (beta) and UreC (alpha) subunits. Three heterotrimers associate to form the active enzyme. Ni cation serves as cofactor. Carboxylation allows a single lysine to coordinate two nickel ions.

The protein localises to the cytoplasm. The catalysed reaction is urea + 2 H2O + H(+) = hydrogencarbonate + 2 NH4(+). Its pathway is nitrogen metabolism; urea degradation; CO(2) and NH(3) from urea (urease route): step 1/1. The protein is Urease subunit alpha of Prochlorococcus marinus (strain MIT 9301).